We begin with the raw amino-acid sequence, 299 residues long: Lipoyl synthase 2 (299 aa).

Cysteine 45, cysteine 50, cysteine 56, cysteine 71, cysteine 75, cysteine 78, and serine 295 together coordinate [4Fe-4S] cluster. Positions 57 to 284 constitute a Radical SAM core domain; the sequence is YASGTATFLL…KSFCSKLGFK (228 aa).

The protein belongs to the radical SAM superfamily. Lipoyl synthase family. [4Fe-4S] cluster is required as a cofactor.

The protein resides in the cytoplasm. The enzyme catalyses [[Fe-S] cluster scaffold protein carrying a second [4Fe-4S](2+) cluster] + N(6)-octanoyl-L-lysyl-[protein] + 2 oxidized [2Fe-2S]-[ferredoxin] + 2 S-adenosyl-L-methionine + 4 H(+) = [[Fe-S] cluster scaffold protein] + N(6)-[(R)-dihydrolipoyl]-L-lysyl-[protein] + 4 Fe(3+) + 2 hydrogen sulfide + 2 5'-deoxyadenosine + 2 L-methionine + 2 reduced [2Fe-2S]-[ferredoxin]. It participates in protein modification; protein lipoylation via endogenous pathway; protein N(6)-(lipoyl)lysine from octanoyl-[acyl-carrier-protein]: step 2/2. In terms of biological role, catalyzes the radical-mediated insertion of two sulfur atoms into the C-6 and C-8 positions of the octanoyl moiety bound to the lipoyl domains of lipoate-dependent enzymes, thereby converting the octanoylated domains into lipoylated derivatives. This is Lipoyl synthase 2 from Prochlorococcus marinus subsp. pastoris (strain CCMP1986 / NIES-2087 / MED4).